Consider the following 302-residue polypeptide: RNA polymerase sigma factor RpoH (302 aa).

The segment at Leu57 to Ser126 is sigma-70 factor domain-2. An Interaction with polymerase core subunit RpoC motif is present at residues Glu81–Ser84. The tract at residues Ala235–Lys286 is sigma-70 factor domain-4. The segment at residues Leu259–Val278 is a DNA-binding region (H-T-H motif).

The protein belongs to the sigma-70 factor family. RpoH subfamily. Interacts with the RNA polymerase core enzyme.

It is found in the cytoplasm. In terms of biological role, sigma factors are initiation factors that promote the attachment of RNA polymerase to specific initiation sites and are then released. This sigma factor is involved in regulation of expression of heat shock genes. The polypeptide is RNA polymerase sigma factor RpoH (Zymomonas mobilis subsp. mobilis (strain ATCC 31821 / ZM4 / CP4)).